Here is a 145-residue protein sequence, read N- to C-terminus: Superoxide dismutase [Mn/Fe] (145 aa).

Fe(3+) is bound by residues His-10 and His-64. The Mn(2+) site is built by His-10 and His-64. Residues 126–145 (TSTANQDTPISEGKKPILGL) form a disordered region.

This sequence belongs to the iron/manganese superoxide dismutase family. Mn(2+) serves as cofactor. Fe(3+) is required as a cofactor.

It catalyses the reaction 2 superoxide + 2 H(+) = H2O2 + O2. In terms of biological role, destroys superoxide anion radicals which are normally produced within the cells and which are toxic to biological systems. Catalyzes the dismutation of superoxide anion radicals into O2 and H2O2 by successive reduction and oxidation of the transition metal ion at the active site. This Streptococcus oralis protein is Superoxide dismutase [Mn/Fe] (sodA).